The sequence spans 253 residues: Triosephosphate isomerase (253 aa).

Position 8–10 (8–10) interacts with substrate; it reads NWK. H91 serves as the catalytic Electrophile. The active-site Proton acceptor is E168. Residues G174, S213, and 234-235 each bind substrate; that span reads GG.

It belongs to the triosephosphate isomerase family. As to quaternary structure, homodimer.

The protein resides in the cytoplasm. The catalysed reaction is D-glyceraldehyde 3-phosphate = dihydroxyacetone phosphate. It functions in the pathway carbohydrate biosynthesis; gluconeogenesis. The protein operates within carbohydrate degradation; glycolysis; D-glyceraldehyde 3-phosphate from glycerone phosphate: step 1/1. Involved in the gluconeogenesis. Catalyzes stereospecifically the conversion of dihydroxyacetone phosphate (DHAP) to D-glyceraldehyde-3-phosphate (G3P). The sequence is that of Triosephosphate isomerase from Acidiphilium cryptum (strain JF-5).